Consider the following 147-residue polypeptide: Cyanate hydratase (147 aa).

Catalysis depends on residues arginine 88, glutamate 91, and serine 114.

This sequence belongs to the cyanase family.

It catalyses the reaction cyanate + hydrogencarbonate + 3 H(+) = NH4(+) + 2 CO2. Its function is as follows. Catalyzes the reaction of cyanate with bicarbonate to produce ammonia and carbon dioxide. The protein is Cyanate hydratase of Acaryochloris marina (strain MBIC 11017).